A 267-amino-acid chain; its full sequence is 4-hydroxy-tetrahydrodipicolinate reductase (267 aa).

NAD(+) is bound by residues 8–13 and E34; that span reads GAAGRM. R35 is a binding site for NADP(+). Residues 98 to 100 and 122 to 125 each bind NAD(+); these read GST and APNM. H155 (proton donor/acceptor) is an active-site residue. H156 provides a ligand contact to (S)-2,3,4,5-tetrahydrodipicolinate. Residue K159 is the Proton donor of the active site. (S)-2,3,4,5-tetrahydrodipicolinate is bound at residue 165-166; the sequence is GT.

The protein belongs to the DapB family.

It is found in the cytoplasm. The catalysed reaction is (S)-2,3,4,5-tetrahydrodipicolinate + NAD(+) + H2O = (2S,4S)-4-hydroxy-2,3,4,5-tetrahydrodipicolinate + NADH + H(+). The enzyme catalyses (S)-2,3,4,5-tetrahydrodipicolinate + NADP(+) + H2O = (2S,4S)-4-hydroxy-2,3,4,5-tetrahydrodipicolinate + NADPH + H(+). The protein operates within amino-acid biosynthesis; L-lysine biosynthesis via DAP pathway; (S)-tetrahydrodipicolinate from L-aspartate: step 4/4. Its function is as follows. Catalyzes the conversion of 4-hydroxy-tetrahydrodipicolinate (HTPA) to tetrahydrodipicolinate. The protein is 4-hydroxy-tetrahydrodipicolinate reductase of Geotalea daltonii (strain DSM 22248 / JCM 15807 / FRC-32) (Geobacter daltonii).